Reading from the N-terminus, the 354-residue chain is Putative Xaa-Pro aminopeptidase (354 aa).

5 residues coordinate Mn(2+): aspartate 213, aspartate 224, histidine 290, glutamate 319, and glutamate 333.

This sequence belongs to the peptidase M24B family. The cofactor is Mn(2+).

It carries out the reaction Release of any N-terminal amino acid, including proline, that is linked to proline, even from a dipeptide or tripeptide.. The protein is Putative Xaa-Pro aminopeptidase (pepP) of Mycoplasma pneumoniae (strain ATCC 29342 / M129 / Subtype 1) (Mycoplasmoides pneumoniae).